A 360-amino-acid chain; its full sequence is Peptide chain release factor 1 (360 aa).

The residue at position 235 (glutamine 235) is an N5-methylglutamine. The interval 284 to 313 is disordered; it reads AKRQQAEASTRRNLLGSGDRSDRNRTYNFP.

Belongs to the prokaryotic/mitochondrial release factor family. In terms of processing, methylated by PrmC. Methylation increases the termination efficiency of RF1.

The protein localises to the cytoplasm. Its function is as follows. Peptide chain release factor 1 directs the termination of translation in response to the peptide chain termination codons UAG and UAA. This Salmonella schwarzengrund (strain CVM19633) protein is Peptide chain release factor 1.